The chain runs to 430 residues: Enolase (430 aa).

Q163 is a (2R)-2-phosphoglycerate binding site. Residue E205 is the Proton donor of the active site. D242, E287, and D314 together coordinate Mg(2+). (2R)-2-phosphoglycerate is bound by residues K339, R368, S369, and K390. K339 functions as the Proton acceptor in the catalytic mechanism.

This sequence belongs to the enolase family. It depends on Mg(2+) as a cofactor.

The protein resides in the cytoplasm. The protein localises to the secreted. It localises to the cell surface. It catalyses the reaction (2R)-2-phosphoglycerate = phosphoenolpyruvate + H2O. Its pathway is carbohydrate degradation; glycolysis; pyruvate from D-glyceraldehyde 3-phosphate: step 4/5. Catalyzes the reversible conversion of 2-phosphoglycerate (2-PG) into phosphoenolpyruvate (PEP). It is essential for the degradation of carbohydrates via glycolysis. In Bacillus cytotoxicus (strain DSM 22905 / CIP 110041 / 391-98 / NVH 391-98), this protein is Enolase.